The primary structure comprises 434 residues: Glutamyl-tRNA reductase (434 aa).

Substrate-binding positions include 49–52 (TCNR), S109, 114–116 (EPQ), and Q120. C50 functions as the Nucleophile in the catalytic mechanism. An NADP(+)-binding site is contributed by 189–194 (GAGEMC).

This sequence belongs to the glutamyl-tRNA reductase family. As to quaternary structure, homodimer.

The catalysed reaction is (S)-4-amino-5-oxopentanoate + tRNA(Glu) + NADP(+) = L-glutamyl-tRNA(Glu) + NADPH + H(+). It participates in porphyrin-containing compound metabolism; protoporphyrin-IX biosynthesis; 5-aminolevulinate from L-glutamyl-tRNA(Glu): step 1/2. Its function is as follows. Catalyzes the NADPH-dependent reduction of glutamyl-tRNA(Glu) to glutamate 1-semialdehyde (GSA). The chain is Glutamyl-tRNA reductase from Trichlorobacter lovleyi (strain ATCC BAA-1151 / DSM 17278 / SZ) (Geobacter lovleyi).